A 451-amino-acid chain; its full sequence is Bifunctional protein GlmU (451 aa).

The segment at 1-229 (MQRHAIILAA…FDEIIGVNDR (229 aa)) is pyrophosphorylase. UDP-N-acetyl-alpha-D-glucosamine contacts are provided by residues 8 to 11 (LAAG), Lys22, Gln72, and 77 to 78 (GT). Asp102 provides a ligand contact to Mg(2+). UDP-N-acetyl-alpha-D-glucosamine contacts are provided by Gly139, Glu154, and Asn227. Asn227 serves as a coordination point for Mg(2+). Residues 230 to 250 (LMLSEAEKALQQRINRYHMEN) are linker. Residues 251-451 (GVTIIDPSST…QVNKEGYLKK (201 aa)) form an N-acetyltransferase region. Positions 332 and 350 each coordinate UDP-N-acetyl-alpha-D-glucosamine. Residue His362 is the Proton acceptor of the active site. UDP-N-acetyl-alpha-D-glucosamine contacts are provided by Tyr365 and Asn376. Residues 385–386 (NY), Ala422, and Arg439 each bind acetyl-CoA.

In the N-terminal section; belongs to the N-acetylglucosamine-1-phosphate uridyltransferase family. This sequence in the C-terminal section; belongs to the transferase hexapeptide repeat family. As to quaternary structure, homotrimer. It depends on Mg(2+) as a cofactor.

It localises to the cytoplasm. The catalysed reaction is alpha-D-glucosamine 1-phosphate + acetyl-CoA = N-acetyl-alpha-D-glucosamine 1-phosphate + CoA + H(+). It carries out the reaction N-acetyl-alpha-D-glucosamine 1-phosphate + UTP + H(+) = UDP-N-acetyl-alpha-D-glucosamine + diphosphate. The protein operates within nucleotide-sugar biosynthesis; UDP-N-acetyl-alpha-D-glucosamine biosynthesis; N-acetyl-alpha-D-glucosamine 1-phosphate from alpha-D-glucosamine 6-phosphate (route II): step 2/2. Its pathway is nucleotide-sugar biosynthesis; UDP-N-acetyl-alpha-D-glucosamine biosynthesis; UDP-N-acetyl-alpha-D-glucosamine from N-acetyl-alpha-D-glucosamine 1-phosphate: step 1/1. It functions in the pathway bacterial outer membrane biogenesis; LPS lipid A biosynthesis. Catalyzes the last two sequential reactions in the de novo biosynthetic pathway for UDP-N-acetylglucosamine (UDP-GlcNAc). The C-terminal domain catalyzes the transfer of acetyl group from acetyl coenzyme A to glucosamine-1-phosphate (GlcN-1-P) to produce N-acetylglucosamine-1-phosphate (GlcNAc-1-P), which is converted into UDP-GlcNAc by the transfer of uridine 5-monophosphate (from uridine 5-triphosphate), a reaction catalyzed by the N-terminal domain. The polypeptide is Bifunctional protein GlmU (Staphylococcus epidermidis).